Reading from the N-terminus, the 189-residue chain is UPF0301 protein RMA_0049 (189 aa).

This sequence belongs to the UPF0301 (AlgH) family.

This is UPF0301 protein RMA_0049 from Rickettsia massiliae (strain Mtu5).